We begin with the raw amino-acid sequence, 334 residues long: GTPase Obg (334 aa).

The region spanning 1–159 (MRFVDEVVIK…KEVRLELNLL (159 aa)) is the Obg domain. The OBG-type G domain maps to 160–331 (ADVALLGLPN…LAKKLNEFLQ (172 aa)). Residues 166–173 (GLPNAGKS), 191–195 (FTTMY), 212–215 (DIPG), 282–285 (NKID), and 312–314 (SAA) contribute to the GTP site. Ser-173 and Thr-193 together coordinate Mg(2+).

This sequence belongs to the TRAFAC class OBG-HflX-like GTPase superfamily. OBG GTPase family. As to quaternary structure, monomer. Mg(2+) serves as cofactor.

It is found in the cytoplasm. Functionally, an essential GTPase which binds GTP, GDP and possibly (p)ppGpp with moderate affinity, with high nucleotide exchange rates and a fairly low GTP hydrolysis rate. Plays a role in control of the cell cycle, stress response, ribosome biogenesis and in those bacteria that undergo differentiation, in morphogenesis control. The sequence is that of GTPase Obg from Francisella tularensis subsp. mediasiatica (strain FSC147).